The following is a 510-amino-acid chain: Inositol-3-phosphate synthase 1 (510 aa).

Residues G70, G71, N72, N73, D143, I180, Q190, R193, T230, A231, N232, T233, G281, S282, D306, S309, N340, N341, D342, K355, G393, D394, D422, and S423 each coordinate NAD(+).

Belongs to the myo-inositol 1-phosphate synthase family. Requires NAD(+) as cofactor.

It localises to the cytoplasm. Its subcellular location is the cytosol. It is found in the nucleus. The enzyme catalyses D-glucose 6-phosphate = 1D-myo-inositol 3-phosphate. It participates in polyol metabolism; myo-inositol biosynthesis; myo-inositol from D-glucose 6-phosphate: step 1/2. Its function is as follows. Key enzyme in myo-inositol biosynthesis pathway that catalyzes the conversion of glucose 6-phosphate to 1-myo-inositol 1-phosphate in a NAD-dependent manner. May play a role in oxidative stress resistance and influences ascorbate levels. The protein is Inositol-3-phosphate synthase 1 of Populus euphratica (Euphrates poplar).